We begin with the raw amino-acid sequence, 70 residues long: Small, acid-soluble spore protein 1 (70 aa).

It belongs to the alpha/beta-type SASP family.

Functionally, SASP are bound to spore DNA. They are double-stranded DNA-binding proteins that cause DNA to change to an a-like conformation. They protect the DNA backbone from chemical and enzymatic cleavage and are thus involved in dormant spore's high resistance to UV light. The protein is Small, acid-soluble spore protein 1 (sasP-1) of Geobacillus stearothermophilus (Bacillus stearothermophilus).